The sequence spans 528 residues: Protein spinster homolog 1 (528 aa).

The segment at 1-38 (MAGSDTAPFLSQADDPDDGPAPGHPGLPGPMGNPKSGE) is disordered. The residue at position 2 (Ala2) is an N-acetylalanine. 12 helical membrane passes run 60-80 (LIVVVLCYINLLNYMDRFTVA), 98-118 (GLIQTVFISSYMVLAPVFGYL), 126-146 (YLMCGGIAFWSLVTLGSSFIP), 160-180 (VGVGEASYSTIAPTLIADLFV), 187-207 (MLSIFYFAIPVGSGLGYIAGS), 218-238 (WALRVTPGLGVLAVLLLFLVV), 278-298 (LGFTSVAFVTGSLALWAPAFL), 323-343 (LIFGLITCLTGVLGVGLGVEI), 357-377 (LVCAAGLLGSAPFLFLALACA), 381-401 (IVATYIFIFIGETLLSMNWAI), 421-441 (FQIVLSHLLGDAGSPYLIGLI), and 465-485 (MLCAFVGALGGAAFLGTAMFI). Residue Ser518 is modified to Phosphoserine.

This sequence belongs to the major facilitator superfamily. Spinster (TC 2.A.1.49) family. In terms of assembly, interacts with BCL2 and BCL2L1. Expressed in liver (at mRNA and protein levels).

It localises to the lysosome membrane. The enzyme catalyses a 1-acyl-sn-glycero-3-phosphocholine(out) + H(+)(out) = a 1-acyl-sn-glycero-3-phosphocholine(in) + H(+)(in). It carries out the reaction 1-hexadecanoyl-sn-glycero-3-phosphocholine(out) + H(+)(out) = 1-hexadecanoyl-sn-glycero-3-phosphocholine(in) + H(+)(in). It catalyses the reaction 1-(9Z-octadecenoyl)-sn-glycero-3-phosphocholine(out) + H(+)(out) = 1-(9Z-octadecenoyl)-sn-glycero-3-phosphocholine(in) + H(+)(in). The catalysed reaction is 1-(5Z,8Z,11Z,14Z-eicosatetraenoyl)-sn-glycero-3-phosphocholine(out) + H(+)(out) = 1-(5Z,8Z,11Z,14Z-eicosatetraenoyl)-sn-glycero-3-phosphocholine(in) + H(+)(in). The enzyme catalyses 1-(4Z,7Z,10Z,13Z,16Z,19Z-docosahexaenoyl)-sn-glycero-3-phosphocholine(out) + H(+)(out) = 1-(4Z,7Z,10Z,13Z,16Z,19Z-docosahexaenoyl)-sn-glycero-3-phosphocholine(in) + H(+)(in). It carries out the reaction a 1-acyl-sn-glycero-3-phosphoethanolamine(out) + H(+)(out) = a 1-acyl-sn-glycero-3-phosphoethanolamine(in) + H(+)(in). It catalyses the reaction 1-(9Z-octadecenoyl)-sn-glycero-3-phosphoethanolamine(out) + H(+)(out) = 1-(9Z-octadecenoyl)-sn-glycero-3-phosphoethanolamine(in) + H(+)(in). The catalysed reaction is 1-acyl-sn-glycero-3-phospho-(1'-sn-glycerol)(out) + H(+)(out) = 1-acyl-sn-glycero-3-phospho-(1'-sn-glycerol)(in) + H(+)(in). The enzyme catalyses 1-(9Z-octadecenoyl)-sn-glycero-3-phospho-(1'-sn-glycerol)(out) + H(+)(out) = 1-(9Z-octadecenoyl)-sn-glycero-3-phospho-(1'-sn-glycerol)(in) + H(+)(in). It carries out the reaction a 1-O-(1Z-alkenyl)-sn-glycero-3-phosphocholine(out) + H(+)(out) = a 1-O-(1Z-alkenyl)-sn-glycero-3-phosphocholine(in) + H(+)(in). It catalyses the reaction 1-(1Z-hexadecenyl)-sn-glycero-3-phosphocholine(out) + H(+)(out) = 1-(1Z-hexadecenyl)-sn-glycero-3-phosphocholine(in) + H(+)(in). The catalysed reaction is a 1-O-(1Z-alkenyl)-sn-glycero-3-phosphoethanolamine(out) + H(+)(out) = a 1-O-(1Z-alkenyl)-sn-glycero-3-phosphoethanolamine(in) + H(+)(in). The enzyme catalyses 1-O-(1Z-hexadecenyl)-sn-glycero-3-phosphoethanolamine(out) + H(+)(out) = 1-O-(1Z-hexadecenyl)-sn-glycero-3-phosphoethanolamine(in) + H(+)(in). Functionally, plays a critical role in the phospholipid salvage pathway from lysosomes to the cytosol. Mediates the rate-limiting, proton-dependent, lysosomal efflux of lysophospholipids, which can then be reacylated by acyltransferases in the endoplasmic reticulum to form phospholipids. Selective for zwitterionic headgroups such as lysophosphatidylcholine (LPC) and lysophosphatidylethanolamine (LPE), can also transport lysophosphatidylglycerol (LPG), but not other anionic lysophospholipids, sphingosine, nor sphingomyelin. Transports lysophospholipids with saturated, monounsaturated, and polyunsaturated fatty acids, such as 1-hexadecanoyl-sn-glycero-3-phosphocholine, 1-(9Z-octadecenoyl)-sn-glycero-3-phosphocholine and 1-(4Z,7Z,10Z,13Z,16Z,19Z-docosahexaenoyl)-sn-glycero-3-phosphocholine, respectively. Can also transport lysoplasmalogen (LPC with a fatty alcohol) such as 1-(1Z-hexadecenyl)-sn-glycero-3-phosphocholine. Essential player in lysosomal homeostasis. Crucial for cell survival under conditions of nutrient limitation. May be involved in necrotic or autophagic cell death. The polypeptide is Protein spinster homolog 1 (Spns1) (Mus musculus (Mouse)).